The chain runs to 186 residues: Nicotinamide-nucleotide adenylyltransferase (186 aa).

This sequence belongs to the archaeal NMN adenylyltransferase family.

Its subcellular location is the cytoplasm. It carries out the reaction beta-nicotinamide D-ribonucleotide + ATP + H(+) = diphosphate + NAD(+). Its pathway is cofactor biosynthesis; NAD(+) biosynthesis; NAD(+) from nicotinamide D-ribonucleotide: step 1/1. In Pyrococcus horikoshii (strain ATCC 700860 / DSM 12428 / JCM 9974 / NBRC 100139 / OT-3), this protein is Nicotinamide-nucleotide adenylyltransferase.